Consider the following 144-residue polypeptide: Large ribosomal subunit protein uL15 (144 aa).

Positions 1 to 13 (MVRERTKKLRGGH) are enriched in basic residues. Residues 1-32 (MVRERTKKLRGGHYGRGFKAGRGKGKKGGSGN) form a disordered region.

This sequence belongs to the universal ribosomal protein uL15 family. As to quaternary structure, part of the 50S ribosomal subunit.

Its function is as follows. Binds to the 23S rRNA. The polypeptide is Large ribosomal subunit protein uL15 (Thermoplasma acidophilum (strain ATCC 25905 / DSM 1728 / JCM 9062 / NBRC 15155 / AMRC-C165)).